Reading from the N-terminus, the 359-residue chain is Peptide chain release factor 1 (359 aa).

Gln236 is modified (N5-methylglutamine).

This sequence belongs to the prokaryotic/mitochondrial release factor family. Methylated by PrmC. Methylation increases the termination efficiency of RF1.

The protein localises to the cytoplasm. In terms of biological role, peptide chain release factor 1 directs the termination of translation in response to the peptide chain termination codons UAG and UAA. This chain is Peptide chain release factor 1, found in Streptococcus pyogenes serotype M18 (strain MGAS8232).